A 257-amino-acid chain; its full sequence is UPF0246 protein SO_3540 (257 aa).

It belongs to the UPF0246 family.

This is UPF0246 protein SO_3540 from Shewanella oneidensis (strain ATCC 700550 / JCM 31522 / CIP 106686 / LMG 19005 / NCIMB 14063 / MR-1).